The chain runs to 383 residues: Succinyl-diaminopimelate desuccinylase (383 aa).

His-72 contributes to the Zn(2+) binding site. The active site involves Asp-74. Residue Asp-105 coordinates Zn(2+). Glu-137 functions as the Proton acceptor in the catalytic mechanism. Zn(2+) contacts are provided by Glu-138, Glu-167, and His-352.

The protein belongs to the peptidase M20A family. DapE subfamily. As to quaternary structure, homodimer. It depends on Zn(2+) as a cofactor. Co(2+) is required as a cofactor.

It carries out the reaction N-succinyl-(2S,6S)-2,6-diaminopimelate + H2O = (2S,6S)-2,6-diaminopimelate + succinate. The protein operates within amino-acid biosynthesis; L-lysine biosynthesis via DAP pathway; LL-2,6-diaminopimelate from (S)-tetrahydrodipicolinate (succinylase route): step 3/3. In terms of biological role, catalyzes the hydrolysis of N-succinyl-L,L-diaminopimelic acid (SDAP), forming succinate and LL-2,6-diaminopimelate (DAP), an intermediate involved in the bacterial biosynthesis of lysine and meso-diaminopimelic acid, an essential component of bacterial cell walls. The protein is Succinyl-diaminopimelate desuccinylase of Ehrlichia ruminantium (strain Welgevonden).